The sequence spans 294 residues: ATP synthase gamma chain (294 aa).

It belongs to the ATPase gamma chain family. As to quaternary structure, F-type ATPases have 2 components, CF(1) - the catalytic core - and CF(0) - the membrane proton channel. CF(1) has five subunits: alpha(3), beta(3), gamma(1), delta(1), epsilon(1). CF(0) has three main subunits: a, b and c.

It localises to the cell inner membrane. Functionally, produces ATP from ADP in the presence of a proton gradient across the membrane. The gamma chain is believed to be important in regulating ATPase activity and the flow of protons through the CF(0) complex. In Rhizobium johnstonii (strain DSM 114642 / LMG 32736 / 3841) (Rhizobium leguminosarum bv. viciae), this protein is ATP synthase gamma chain.